Reading from the N-terminus, the 778-residue chain is Endonuclease MutS2 (778 aa).

328-335 (GPNTGGKT) is an ATP binding site. Positions 703–778 (LDLRGKRYEE…GSGCTIANLG (76 aa)) constitute a Smr domain.

This sequence belongs to the DNA mismatch repair MutS family. MutS2 subfamily. In terms of assembly, homodimer. Binds to stalled ribosomes, contacting rRNA.

Its function is as follows. Endonuclease that is involved in the suppression of homologous recombination and thus may have a key role in the control of bacterial genetic diversity. Functionally, acts as a ribosome collision sensor, splitting the ribosome into its 2 subunits. Detects stalled/collided 70S ribosomes which it binds and splits by an ATP-hydrolysis driven conformational change. Acts upstream of the ribosome quality control system (RQC), a ribosome-associated complex that mediates the extraction of incompletely synthesized nascent chains from stalled ribosomes and their subsequent degradation. Probably generates substrates for RQC. The polypeptide is Endonuclease MutS2 (Streptococcus equi subsp. zooepidemicus (strain H70)).